The sequence spans 341 residues: Methionine import ATP-binding protein MetN 3 (341 aa).

The region spanning 2–241 (IEFQNVTKTF…PSHETTKRFI (240 aa)) is the ABC transporter domain. 38 to 45 (GFSGAGKS) provides a ligand contact to ATP.

The protein belongs to the ABC transporter superfamily. Methionine importer (TC 3.A.1.24) family. In terms of assembly, the complex is composed of two ATP-binding proteins (MetN), two transmembrane proteins (MetI) and a solute-binding protein (MetQ).

It localises to the cell membrane. The enzyme catalyses L-methionine(out) + ATP + H2O = L-methionine(in) + ADP + phosphate + H(+). It catalyses the reaction D-methionine(out) + ATP + H2O = D-methionine(in) + ADP + phosphate + H(+). In terms of biological role, part of the ABC transporter complex MetNIQ involved in methionine import. Responsible for energy coupling to the transport system. In Oceanobacillus iheyensis (strain DSM 14371 / CIP 107618 / JCM 11309 / KCTC 3954 / HTE831), this protein is Methionine import ATP-binding protein MetN 3.